The sequence spans 273 residues: Small ribosomal subunit protein uS3 (273 aa).

Residues 43–111 form the KH type-2 domain; that stretch reads IRQLMSTGME…QVQLNILEVK (69 aa). Residues 218–227 are compositionally biased toward low complexity; sequence QQAAAAPSRG. Residues 218 to 273 form a disordered region; it reads QQAAAAPSRGRAGDRPGRPGGDRRRRNDRPAAEAAPAAVEAPAAEAAAPAAEGGQA. Basic and acidic residues predominate over residues 228–239; sequence RAGDRPGRPGGD. Low complexity predominate over residues 249-273; it reads AEAAPAAVEAPAAEAAAPAAEGGQA.

The protein belongs to the universal ribosomal protein uS3 family. Part of the 30S ribosomal subunit. Forms a tight complex with proteins S10 and S14.

Functionally, binds the lower part of the 30S subunit head. Binds mRNA in the 70S ribosome, positioning it for translation. In Paenarthrobacter aurescens (strain TC1), this protein is Small ribosomal subunit protein uS3.